Reading from the N-terminus, the 230-residue chain is Sugar fermentation stimulation protein homolog (230 aa).

Belongs to the SfsA family.

This Caldivirga maquilingensis (strain ATCC 700844 / DSM 13496 / JCM 10307 / IC-167) protein is Sugar fermentation stimulation protein homolog.